Here is a 586-residue protein sequence, read N- to C-terminus: Probable riboflavin import ATP-binding protein RfuB (586 aa).

ABC transporter domains are found at residues 46-299 and 343-586; these read RAVD…NECI and LRVE…DSHT. Position 89–96 (89–96) interacts with ATP; that stretch reads GKNGAGKS.

This sequence belongs to the ABC transporter superfamily. As to quaternary structure, the complex is probably composed of two ATP-binding proteins (RfuB), two transmembrane proteins (RfuC and RfuD) and a solute-binding protein (RfuA).

The protein localises to the cell inner membrane. Functionally, probably part of the ABC transporter complex RfuABCD involved in riboflavin import. Probably responsible for energy coupling to the transport system. In Treponema pallidum (strain Nichols), this protein is Probable riboflavin import ATP-binding protein RfuB.